The primary structure comprises 84 residues: MSGGSTGERPFSDIITSIRYWIIHSITIPSLFVAGFLFVSTGLAYDAFGTPRPNEYFTQDRQQIPLVNDRFSAKQELEDLTKGL.

Residues 22–36 (IIHSITIPSLFVAGF) form a helical membrane-spanning segment. H24 provides a ligand contact to heme.

The protein belongs to the PsbE/PsbF family. As to quaternary structure, heterodimer of an alpha subunit and a beta subunit. PSII is composed of 1 copy each of membrane proteins PsbA, PsbB, PsbC, PsbD, PsbE, PsbF, PsbH, PsbI, PsbJ, PsbK, PsbL, PsbM, PsbT, PsbX, PsbY, PsbZ, Psb30/Ycf12, at least 3 peripheral proteins of the oxygen-evolving complex and a large number of cofactors. It forms dimeric complexes. The cofactor is heme b.

It localises to the plastid. Its subcellular location is the chloroplast thylakoid membrane. In terms of biological role, this b-type cytochrome is tightly associated with the reaction center of photosystem II (PSII). PSII is a light-driven water:plastoquinone oxidoreductase that uses light energy to abstract electrons from H(2)O, generating O(2) and a proton gradient subsequently used for ATP formation. It consists of a core antenna complex that captures photons, and an electron transfer chain that converts photonic excitation into a charge separation. The polypeptide is Cytochrome b559 subunit alpha (Emiliania huxleyi (Coccolithophore)).